The following is a 207-amino-acid chain: Probable nicotinate-nucleotide adenylyltransferase (207 aa).

It belongs to the NadD family.

The enzyme catalyses nicotinate beta-D-ribonucleotide + ATP + H(+) = deamido-NAD(+) + diphosphate. The protein operates within cofactor biosynthesis; NAD(+) biosynthesis; deamido-NAD(+) from nicotinate D-ribonucleotide: step 1/1. Catalyzes the reversible adenylation of nicotinate mononucleotide (NaMN) to nicotinic acid adenine dinucleotide (NaAD). The polypeptide is Probable nicotinate-nucleotide adenylyltransferase (Desulfitobacterium hafniense (strain DSM 10664 / DCB-2)).